The primary structure comprises 411 residues: Lissencephaly-1 homolog (411 aa).

The 33-residue stretch at 7 to 39 folds into the LisH domain; it reads QREELNKAIADYLASNGFMEALESFKKETDMPG. Positions 54-80 form a coiled coil; that stretch reads TSVIRLQKKVMDLEGRLAEAEKEYISG. The span at 77-89 shows a compositional bias: basic and acidic residues; it reads YISGTPSREKRSP. A disordered region spans residues 77 to 96; that stretch reads YISGTPSREKRSPTEWIPRP. WD repeat units lie at residues 104–145, 146–187, 188–227, 230–269, 272–334, 337–376, and 379–411; these read GHRA…RTIK, GHTD…RTMH, GHDH…CVRT, GHRD…CKLE, EHDH…ALFT, GHDN…CCKT, and AHSH…WECR.

It belongs to the WD repeat LIS1/nudF family.

The protein resides in the cytoplasm. It localises to the cytoskeleton. It is found in the microtubule organizing center. The protein localises to the centrosome. Its function is as follows. Positively regulates the activity of the minus-end directed microtubule motor protein dynein. May enhance dynein-mediated microtubule sliding by targeting dynein to the microtubule plus end. Required for several dynein- and microtubule-dependent processes. This chain is Lissencephaly-1 homolog, found in Ixodes scapularis (Black-legged tick).